Here is a 332-residue protein sequence, read N- to C-terminus: UPF0194 membrane protein YbhG (332 aa).

Positions 1-16 (MMKKPVVIGLAVVVLA) are cleaved as a signal peptide. The stretch at 108 to 209 (EEIAQAAAAV…LNLQDSTLIA (102 aa)) forms a coiled coil.

The protein belongs to the UPF0194 family.

The protein localises to the periplasm. The chain is UPF0194 membrane protein YbhG from Escherichia coli O127:H6 (strain E2348/69 / EPEC).